Here is a 362-residue protein sequence, read N- to C-terminus: Probable dual-specificity RNA methyltransferase RlmN (362 aa).

Residue Glu105 is the Proton acceptor of the active site. One can recognise a Radical SAM core domain in the interval 111-344; the sequence is HEYGNSICVT…VTIRREQGHD (234 aa). Cys118 and Cys349 are joined by a disulfide. [4Fe-4S] cluster is bound by residues Cys125, Cys129, and Cys132. Residues 175–176, Ser207, 230–232, and Asn306 contribute to the S-adenosyl-L-methionine site; these read GE and SLH. Residue Cys349 is the S-methylcysteine intermediate of the active site.

It belongs to the radical SAM superfamily. RlmN family. [4Fe-4S] cluster is required as a cofactor.

The protein resides in the cytoplasm. It carries out the reaction adenosine(2503) in 23S rRNA + 2 reduced [2Fe-2S]-[ferredoxin] + 2 S-adenosyl-L-methionine = 2-methyladenosine(2503) in 23S rRNA + 5'-deoxyadenosine + L-methionine + 2 oxidized [2Fe-2S]-[ferredoxin] + S-adenosyl-L-homocysteine. The enzyme catalyses adenosine(37) in tRNA + 2 reduced [2Fe-2S]-[ferredoxin] + 2 S-adenosyl-L-methionine = 2-methyladenosine(37) in tRNA + 5'-deoxyadenosine + L-methionine + 2 oxidized [2Fe-2S]-[ferredoxin] + S-adenosyl-L-homocysteine. Functionally, specifically methylates position 2 of adenine 2503 in 23S rRNA and position 2 of adenine 37 in tRNAs. This is Probable dual-specificity RNA methyltransferase RlmN from Bacillus anthracis (strain A0248).